A 184-amino-acid polypeptide reads, in one-letter code: Cysteine proteinase inhibitor 3 (184 aa).

The N-terminal stretch at 1–35 is a signal peptide; the sequence is MLRRRGFCCCSGAPAAAAAALLLLAVAAAAPRAAG. Positions 48-134 constitute a Cystatin domain; that stretch reads GMLAAIRREQ…KAVVEFRHVG (87 aa). The Secondary area of contact signature appears at 90–94; the sequence is QVVTG. The segment at 138–165 is disordered; that stretch reads SQSATAADDNAGQDTADPTVASRNDLHN.

Belongs to the cystatin family. Phytocystatin subfamily.

Its subcellular location is the secreted. Specific inhibitor of cysteine proteinases. Probably involved in the regulation of endogenous processes and in defense against pests and pathogens. The polypeptide is Cysteine proteinase inhibitor 3 (Oryza sativa subsp. japonica (Rice)).